Here is a 273-residue protein sequence, read N- to C-terminus: NADPH-dependent 7-cyano-7-deazaguanine reductase (273 aa).

81–83 provides a ligand contact to substrate; sequence VES. 83-84 is an NADPH binding site; sequence SK. Residue cysteine 179 is the Thioimide intermediate of the active site. Catalysis depends on aspartate 186, which acts as the Proton donor. A substrate-binding site is contributed by 218–219; sequence AE. Position 247-248 (247-248) interacts with NADPH; sequence RG.

The protein belongs to the GTP cyclohydrolase I family. QueF type 2 subfamily. In terms of assembly, homodimer.

The protein localises to the cytoplasm. The catalysed reaction is 7-aminomethyl-7-carbaguanine + 2 NADP(+) = 7-cyano-7-deazaguanine + 2 NADPH + 3 H(+). It functions in the pathway tRNA modification; tRNA-queuosine biosynthesis. Its function is as follows. Catalyzes the NADPH-dependent reduction of 7-cyano-7-deazaguanine (preQ0) to 7-aminomethyl-7-deazaguanine (preQ1). In Rickettsia prowazekii (strain Madrid E), this protein is NADPH-dependent 7-cyano-7-deazaguanine reductase.